Consider the following 90-residue polypeptide: Putative sodium channel toxin Ts35 (90 aa).

Residues 1–22 (QDEVGLGSCSVIFVVGNEEGEA) form the signal peptide. The LCN-type CS-alpha/beta domain maps to 23–87 (KDGYAVGGDR…WGNPTLGPCL (65 aa)). Cystine bridges form between Cys33–Cys86, Cys37–Cys61, Cys46–Cys66, and Cys50–Cys68.

The protein belongs to the long (4 C-C) scorpion toxin superfamily. Sodium channel inhibitor family. Expressed by the venom gland.

It localises to the secreted. Putative sodium channel toxin. This Tityus serrulatus (Brazilian scorpion) protein is Putative sodium channel toxin Ts35.